The chain runs to 234 residues: Large ribosomal subunit protein uL1 (234 aa).

The protein belongs to the universal ribosomal protein uL1 family. As to quaternary structure, part of the 50S ribosomal subunit.

In terms of biological role, binds directly to 23S rRNA. The L1 stalk is quite mobile in the ribosome, and is involved in E site tRNA release. Protein L1 is also a translational repressor protein, it controls the translation of the L11 operon by binding to its mRNA. The polypeptide is Large ribosomal subunit protein uL1 (Bdellovibrio bacteriovorus (strain ATCC 15356 / DSM 50701 / NCIMB 9529 / HD100)).